Here is a 540-residue protein sequence, read N- to C-terminus: Chaperonin GroEL (540 aa).

ATP is bound by residues 30 to 33 (TLGP), Lys-51, 87 to 91 (DGTTT), Gly-415, and Asp-495.

It belongs to the chaperonin (HSP60) family. In terms of assembly, forms a cylinder of 14 subunits composed of two heptameric rings stacked back-to-back. Interacts with the co-chaperonin GroES.

Its subcellular location is the cytoplasm. It carries out the reaction ATP + H2O + a folded polypeptide = ADP + phosphate + an unfolded polypeptide.. In terms of biological role, together with its co-chaperonin GroES, plays an essential role in assisting protein folding. The GroEL-GroES system forms a nano-cage that allows encapsulation of the non-native substrate proteins and provides a physical environment optimized to promote and accelerate protein folding. The chain is Chaperonin GroEL from Serratia marcescens.